A 503-amino-acid chain; its full sequence is D-alanine--D-alanyl carrier protein ligase (503 aa).

151-152 (TS) provides a ligand contact to ATP. Residue aspartate 196 coordinates D-alanine. Position 291–296 (291–296 (NTYGPT)) interacts with ATP. Valine 300 is a binding site for D-alanine. ATP contacts are provided by aspartate 382 and lysine 491. Lysine 491 contributes to the D-alanine binding site.

Belongs to the ATP-dependent AMP-binding enzyme family. DltA subfamily.

The protein resides in the cytoplasm. The catalysed reaction is holo-[D-alanyl-carrier protein] + D-alanine + ATP = D-alanyl-[D-alanyl-carrier protein] + AMP + diphosphate. It participates in cell wall biogenesis; lipoteichoic acid biosynthesis. In terms of biological role, catalyzes the first step in the D-alanylation of lipoteichoic acid (LTA), the activation of D-alanine and its transfer onto the D-alanyl carrier protein (Dcp) DltC. In an ATP-dependent two-step reaction, forms a high energy D-alanyl-AMP intermediate, followed by transfer of the D-alanyl residue as a thiol ester to the phosphopantheinyl prosthetic group of the Dcp. D-alanylation of LTA plays an important role in modulating the properties of the cell wall in Gram-positive bacteria, influencing the net charge of the cell wall. The sequence is that of D-alanine--D-alanyl carrier protein ligase from Bacillus velezensis (strain DSM 23117 / BGSC 10A6 / LMG 26770 / FZB42) (Bacillus amyloliquefaciens subsp. plantarum).